A 246-amino-acid chain; its full sequence is 33kDa venom protein (246 aa).

The first 20 residues, 1 to 20, serve as a signal peptide directing secretion; it reads MAGKEVIFIMALFIAVESSP. 7 consecutive repeat copies span residues 83-96, 97-110, 111-124, 125-138, 139-152, 153-166, and 167-180. Residues 83–243 are 12 X approximate tandem repeats of [AV][DE]X[VL]SGSX[DE]QX[KR]X[ST]; that stretch reads GGAVSESVKQ…SGSVGNDDDI (161 aa). Residues 88–246 form a disordered region; that stretch reads ESVKQKRETA…VGNDDDISVQ (159 aa). Positions 112–123 are enriched in polar residues; that stretch reads ENLSGSFDQQKS. The span at 175-186 shows a compositional bias: basic and acidic residues; sequence DKQKVTVEEKSE. The stretch at 181–187 is one 8; half-length repeat; the sequence is VEEKSEP. 4 consecutive repeat copies span residues 188 to 201, 202 to 215, 216 to 229, and 230 to 243. The segment covering 217 to 228 has biased composition (polar residues); it reads ESLSGSFDQQKS.

As to expression, expressed by the venom gland.

The protein localises to the secreted. The chain is 33kDa venom protein from Chelonus sp. nr. curvimaculatus (Parasitic wasp).